The sequence spans 686 residues: Translation initiation factor IF-2 (686 aa).

Positions glutamate 53–aspartate 105 are disordered. Residues arginine 69–glycine 81 are compositionally biased toward basic residues. The region spanning glutamate 188–lysine 357 is the tr-type G domain. The interval glycine 197–threonine 204 is G1. Glycine 197 to threonine 204 serves as a coordination point for GTP. The interval glycine 222–histidine 226 is G2. The segment at aspartate 243 to glycine 246 is G3. GTP-binding positions include aspartate 243–histidine 247 and asparagine 297–aspartate 300. Residues asparagine 297–aspartate 300 are G4. Residues serine 333 to isoleucine 335 form a G5 region.

This sequence belongs to the TRAFAC class translation factor GTPase superfamily. Classic translation factor GTPase family. IF-2 subfamily.

Its subcellular location is the cytoplasm. In terms of biological role, one of the essential components for the initiation of protein synthesis. Protects formylmethionyl-tRNA from spontaneous hydrolysis and promotes its binding to the 30S ribosomal subunits. Also involved in the hydrolysis of GTP during the formation of the 70S ribosomal complex. This is Translation initiation factor IF-2 from Bacillus cereus (strain ATCC 10987 / NRS 248).